We begin with the raw amino-acid sequence, 101 residues long: Large ribosomal subunit protein uL24c (101 aa).

This sequence belongs to the universal ribosomal protein uL24 family. In terms of assembly, part of the 50S ribosomal subunit.

Its subcellular location is the plastid. The protein resides in the chloroplast. Functionally, one of two assembly initiator proteins, it binds directly to the 5'-end of the 23S rRNA, where it nucleates assembly of the 50S subunit. This chain is Large ribosomal subunit protein uL24c (rpl24), found in Guillardia theta (Cryptophyte).